We begin with the raw amino-acid sequence, 568 residues long: Oxygen-dependent choline dehydrogenase (568 aa).

6–35 (DYIIVGAGSAGCVLADRLSASGEHYILLLE) serves as a coordination point for FAD. The active-site Proton acceptor is the H470.

This sequence belongs to the GMC oxidoreductase family. It depends on FAD as a cofactor.

It carries out the reaction choline + A = betaine aldehyde + AH2. It catalyses the reaction betaine aldehyde + NAD(+) + H2O = glycine betaine + NADH + 2 H(+). It participates in amine and polyamine biosynthesis; betaine biosynthesis via choline pathway; betaine aldehyde from choline (cytochrome c reductase route): step 1/1. Functionally, involved in the biosynthesis of the osmoprotectant glycine betaine. Catalyzes the oxidation of choline to betaine aldehyde and betaine aldehyde to glycine betaine at the same rate. The polypeptide is Oxygen-dependent choline dehydrogenase (Photobacterium profundum (strain SS9)).